Consider the following 440-residue polypeptide: MKLKYKVILIINFVTVLFSIFTFIGYLNNLIGFRVVTISLCITIAMTVYLLYKKRKGFLLVYLIYLFLTNFGVFVTNIFLANPLVEYHGDLSWYYINTSNLFSIATFAILTFTILSNFISVFSKINPSRKFDIKSKGNNLFYYTGILFIIGFTIQFLFYIITGRLAINTYGDYVSSIQELPMYTYGIFFFSIGIAFAFSNVKKTHIKYLVIILTPQVLFFLITGNRGEVFYPILSALGVLIVRNYKIKWWMIITIVFTLFFVIPFIKVFRNMDSSSIEKVDINWFSSLVEIGYTLRPLGYVTRWIDGGESIVYGKSYLAPIQNIFSYIIPGLQPVNYEMVGYGFRYRLPGMGFNVIAEAYYNGAIVGVLIVMVLLVLLLWKFTNFKSFEMLSMGTAIVSVLINNIRNAFSFVPAYILIIIVIVIILLFIDSYLKKETKAD.

Transmembrane regions (helical) follow at residues 7 to 27 (VILI…IGYL), 31 to 51 (IGFR…VYLL), 60 to 80 (LVYL…NIFL), 102 to 122 (FSIA…ISVF), 141 to 161 (FYYT…FYII), 179 to 199 (ELPM…FAFS), 204 to 224 (THIK…LITG), 249 to 269 (WWMI…IKVF), 324 to 344 (IFSY…GYGF), 360 to 380 (YYNG…LLLW), 382 to 402 (FTNF…SVLI), and 409 to 429 (FSFV…LLFI).

The protein localises to the cell membrane. The protein operates within capsule biogenesis; capsule polysaccharide biosynthesis. Required for the biosynthesis of type 1 capsular polysaccharide. The polypeptide is Protein CapE (capE) (Staphylococcus aureus).